The chain runs to 247 residues: Cytochrome c oxidase subunit 2 (247 aa).

Topologically, residues 12–38 (DVPTPWGLYFQDSSTPNQEGIIELHDN) are mitochondrial intermembrane. A helical membrane pass occupies residues 39–59 (IMFYLVLILCTVSWLLFSIVK). The Mitochondrial matrix portion of the chain corresponds to 60–78 (DSSKNPLPHKYLVHGQTIE). A helical membrane pass occupies residues 79–101 (IIWTILPAVVLLIIAFPSFILLY). At 102 to 247 (LCDEVISPAM…KEFLTWLNEQ (146 aa)) the chain is on the mitochondrial intermembrane side. Positions 182, 217, 219, 221, 225, and 228 each coordinate Cu cation. A Mg(2+)-binding site is contributed by glutamate 219.

The protein belongs to the cytochrome c oxidase subunit 2 family. Component of the cytochrome c oxidase (complex IV, CIV), a multisubunit enzyme composed of a catalytic core of 3 subunits and several supernumerary subunits. The complex exists as a monomer or a dimer and forms supercomplexes (SCs) in the inner mitochondrial membrane with ubiquinol-cytochrome c oxidoreductase (cytochrome b-c1 complex, complex III, CIII). Requires Cu cation as cofactor. In terms of processing, the signal sequence of COX2 is processed by IMP1.

The protein localises to the mitochondrion inner membrane. The catalysed reaction is 4 Fe(II)-[cytochrome c] + O2 + 8 H(+)(in) = 4 Fe(III)-[cytochrome c] + 2 H2O + 4 H(+)(out). Functionally, component of the cytochrome c oxidase, the last enzyme in the mitochondrial electron transport chain which drives oxidative phosphorylation. The respiratory chain contains 3 multisubunit complexes succinate dehydrogenase (complex II, CII), ubiquinol-cytochrome c oxidoreductase (cytochrome b-c1 complex, complex III, CIII) and cytochrome c oxidase (complex IV, CIV), that cooperate to transfer electrons derived from NADH and succinate to molecular oxygen, creating an electrochemical gradient over the inner membrane that drives transmembrane transport and the ATP synthase. Cytochrome c oxidase is the component of the respiratory chain that catalyzes the reduction of oxygen to water. Electrons originating from reduced cytochrome c in the intermembrane space (IMS) are transferred via the dinuclear copper A center (CU(A)) of subunit 2 and heme A of subunit 1 to the active site in subunit 1, a binuclear center (BNC) formed by heme A3 and copper B (CU(B)). The BNC reduces molecular oxygen to 2 water molecules using 4 electrons from cytochrome c in the IMS and 4 protons from the mitochondrial matrix. This is Cytochrome c oxidase subunit 2 (COX2) from Cyberlindnera mrakii (Yeast).